A 323-amino-acid chain; its full sequence is Ficolin-2 (323 aa).

The N-terminal stretch at 1 to 26 (MDTRGVAAAMRPLVLLVAFLCTAAPA) is a signal peptide. The Collagen-like domain occupies 52–102 (GLPGAAGPKGEAGASGPKGGQGPPGAPGEPGPPGPKGDRGEKGEPGPKGES). Positions 55–66 (GAAGPKGEAGAS) are enriched in low complexity. Residues 55–107 (GAAGPKGEAGASGPKGGQGPPGAPGEPGPPGPKGDRGEKGEPGPKGESWETEQ) form a disordered region. A compositionally biased stretch (pro residues) spans 75–86 (PGAPGEPGPPGP). Over residues 87-102 (KGDRGEKGEPGPKGES) the composition is skewed to basic and acidic residues. The region spanning 106-323 (EQCLTGPRTC…KVSEMKFRAT (218 aa)) is the Fibrinogen C-terminal domain. Disulfide bonds link cysteine 108-cysteine 136 and cysteine 115-cysteine 143. The N-linked (GlcNAc...) asparagine glycan is linked to asparagine 249. Ca(2+) is bound by residues aspartate 259, aspartate 261, and serine 265. Cysteine 267 and cysteine 280 are oxidised to a cystine. Residues asparagine 302 and asparagine 310 are each glycosylated (N-linked (GlcNAc...) asparagine).

Belongs to the ficolin lectin family. In terms of assembly, homotrimer. Interacts with elastin. Interacts with MASP1 and MASP2. Mainly expressed in skeletal muscle.

It is found in the secreted. Its function is as follows. May function in innate immunity through activation of the lectin complement pathway. Calcium-dependent and GlcNAc-binding lectin. This Sus scrofa (Pig) protein is Ficolin-2 (FCN2).